A 240-amino-acid chain; its full sequence is Uridylate kinase (240 aa).

Residue 13-16 (KASG) coordinates ATP. An involved in allosteric activation by GTP region spans residues 21–26 (GSQGFG). A UMP-binding site is contributed by G55. ATP contacts are provided by G56 and R60. Residues D75 and 136–143 (TGNPFFTT) contribute to the UMP site. 4 residues coordinate ATP: T163, Q164, Y169, and D172.

Belongs to the UMP kinase family. Homohexamer.

The protein localises to the cytoplasm. It carries out the reaction UMP + ATP = UDP + ADP. It functions in the pathway pyrimidine metabolism; CTP biosynthesis via de novo pathway; UDP from UMP (UMPK route): step 1/1. With respect to regulation, allosterically activated by GTP. Inhibited by UTP. Functionally, catalyzes the reversible phosphorylation of UMP to UDP. This chain is Uridylate kinase, found in Brucella suis biovar 1 (strain 1330).